The sequence spans 189 residues: Probable transcriptional regulator Rv1176c (189 aa).

It belongs to the PadR family. Homodimer.

The protein localises to the cytoplasm. Functionally, probable transcriptional regulator that may help mitigate the effect of oxidative stress and help mycobacteria survive inside macrophages. Binds to its own promoter region. In Mycobacterium tuberculosis (strain ATCC 25618 / H37Rv), this protein is Probable transcriptional regulator Rv1176c.